Here is a 468-residue protein sequence, read N- to C-terminus: Trehalose-2-sulfate acyltransferase PapA2 (468 aa).

Belongs to the PapA acyltransferase family.

It catalyses the reaction 2-O-sulfo-alpha,alpha-trehalose + hexadecanoyl-CoA = 2-O-sulfo-2'-O-hexadecanoyl-alpha,alpha-trehalose + CoA. In terms of biological role, catalyzes the acylation of trehalose-2-sulfate by adding the palmitoyl group at the 2'-position to yield the intermediate trehalose-2-sulfate-2'-palmitate (SL659). This chain is Trehalose-2-sulfate acyltransferase PapA2 (papA2), found in Mycobacterium tuberculosis (strain ATCC 25177 / H37Ra).